A 234-amino-acid chain; its full sequence is Phosphoribosylaminoimidazole-succinocarboxamide synthase (234 aa).

Belongs to the SAICAR synthetase family.

It catalyses the reaction 5-amino-1-(5-phospho-D-ribosyl)imidazole-4-carboxylate + L-aspartate + ATP = (2S)-2-[5-amino-1-(5-phospho-beta-D-ribosyl)imidazole-4-carboxamido]succinate + ADP + phosphate + 2 H(+). Its pathway is purine metabolism; IMP biosynthesis via de novo pathway; 5-amino-1-(5-phospho-D-ribosyl)imidazole-4-carboxamide from 5-amino-1-(5-phospho-D-ribosyl)imidazole-4-carboxylate: step 1/2. The sequence is that of Phosphoribosylaminoimidazole-succinocarboxamide synthase from Sulfurisphaera tokodaii (strain DSM 16993 / JCM 10545 / NBRC 100140 / 7) (Sulfolobus tokodaii).